Consider the following 1434-residue polypeptide: MLRLPKKGLPRFEQVQDEDTYLENLAIQRNASAFFEKYDRSEIQELLTTALVSWLSAKEDVRSQVDLPCGIMSQMNNVGFSTAILLTPVDPTALLDYREVHQMIRELAIGIYCLNQIPSISLEANYDQSSSCQLPPAYYDTRIGQILINIDYMLKALWHGIYMPKEKRARFSELWRAIMDIDPDGKPQTNKDIFSEFSSAGLTDITKDPDFNEIYDEDVNEDPTYDPNSPEETAVFMKYAENIMLKLTFSTTQIQQYENVFIFETGYWLTNAIKYNQDYLDICTYQRLQQRLYLQKKIIQKHFEKKKDIRRGIGYLKLICFLIPFLLSLKKKMKVPYLSSLLQPFSDDKVKTERELPPFIYGRDFKCQNFHYKENQYFHVHGGIEFDISTPSIENALEDFQKNLEKIRDCAANTFIEDSGYKEYYSIPVMEFHGKSYYVIYFELETFYQQLYKTQWWGAINEIVNNLRLKRLPLTDAQLHEQFKKKLGFKRAMKCKSIPFGMKSAVERGLSAVFHTFSRKTSSSTINVSDEAGYTIFHHAALHNRVSIICQLCNANFKVNQRRFVTFSQGPTPLHLAAQACSLETTVCLLCSKADYTLSEKRGWMPIHFAAFYDNVCIIIALCRKDPSLLEAEATAENQCTPLLLAATSGALDTIQYLFSIGANWRKTDIKGNNIIHLSVLTFHTEVLKYIIKLNIPELPVWKTLVEMLQCESYKRRMMAVMSLEVICLANDQYWRCILDAGTIPALINLLKSSKIKLQCKTVGLLSNISTHKSAVHALVEAGGIPSLINLLVCDEPEVHSRCAVILYDIAQCENKDVIAKYNGIPSLINLLNLNIENVLVNVMNCIRVLCIGNENNQRAVREHKGLPYLIRFLSSDSDVLKAVSSAAIAEVGRDNKEIQDAIAMEGAIPPLVALFKGKQISVQMKGAMAVESLASHNALIQKAFLEKSLTKYLLKLLKAFQIDVKEQGAVALWALAGQTLKQQKYMAEQIGYSFIINMLLSPSAKMQYVGGEAVIALSKDSRMHQNQICEGNGIAPLVRLLRISTIAEGTLLSVIRAVGSICIGVAHTSNPVSQQLVVDENAFPVLIQLLRNHPSPNIKVEVAFSLACIVLGNDVLQKDLHENEGFEYADVLYLLHSTEKDICLRAGYALTLFAFNNRFQQYLILESGIMTISIFERFLESTVETEKAMAAFQIVVLAKVIRDMDHITLSARGVTILVDSLYSVQTSTIVLTGNLIASLAHSRAGIPEAFTTLGTIQRLCYHLYSGIEEVRAACSSALGYLTYNANAFRILLKECRNKPNQFIRIKNNISRDASINPAFLKEFQMQQTLVGLPSLSLEKNGGPSIIPIFKRGKEHRRKLKPKIQPKDSLTLLPPVTNFMGLFKATKKTKDSHNIFSFSSTITSDITNVSRPRIVCLNQLGKHVQKANPEPAEG.

The chain crosses the membrane as a helical span at residues 309–329 (IRRGIGYLKLICFLIPFLLSL). ANK repeat units lie at residues 532–561 (AGYT…KVNQ), 569–598 (QGPT…DYTL), 602–631 (RGWM…SLLE), 638–667 (NQCT…NWRK), and 671–701 (KGNN…ELPV). 6 ARM repeats span residues 732–771 (DQYW…NIST), 773–812 (KSAV…DIAQ), 814–852 (ENKD…VLCI), 855–894 (ENNQ…EVGR), 897–936 (KEIQ…SLAS), and 1072–1112 (PVSQ…CIVL).

As to expression, ubiquitously expressed with highest level in pancreas and lowest in skeletal muscle.

It is found in the membrane. This is Ankyrin and armadillo repeat-containing protein (ANKAR) from Homo sapiens (Human).